Here is a 58-residue protein sequence, read N- to C-terminus: Photosystem II reaction center X protein (58 aa).

A helical membrane pass occupies residues 27–47; that stretch reads IGSFLAAAAFIVVPAASFLIW.

This sequence belongs to the PsbX family. Type 2 subfamily. PSII consists of a core antenna complex that captures photons, and an electron transfer chain that converts photonic excitation into a charge separation. PSII forms dimeric complexes.

It is found in the cellular thylakoid membrane. Involved in the binding and/or turnover of quinones at the Q(B) site of Photosystem II. This chain is Photosystem II reaction center X protein, found in Prochlorococcus marinus (strain MIT 9211).